The chain runs to 299 residues: Probable phosphate butyryltransferase (299 aa).

Belongs to the phosphate acetyltransferase and butyryltransferase family.

It carries out the reaction butanoyl-CoA + phosphate = butanoyl phosphate + CoA. In terms of biological role, catalyzes the conversion of butyryl-CoA through butyryl phosphate to butyrate. This Bacillus subtilis (strain 168) protein is Probable phosphate butyryltransferase (yqiS).